The sequence spans 514 residues: Putative GTP-binding protein 6 (514 aa).

Positions 48 to 71 are disordered; that stretch reads WAGGGPVRGGGEEDPREDEEEEED. The segment covering 59-71 has biased composition (acidic residues); it reads EEDPREDEEEEED. In terms of domain architecture, Hflx-type G spans 285-449; that stretch reads PVVSVVGYTN…ALEASVLRAT (165 aa). Mg(2+)-binding residues include threonine 298 and threonine 319.

The protein belongs to the TRAFAC class OBG-HflX-like GTPase superfamily. HflX GTPase family. Mg(2+) is required as a cofactor.

This chain is Putative GTP-binding protein 6 (Gtpbp6), found in Mus musculus (Mouse).